We begin with the raw amino-acid sequence, 86 residues long: Protein Tat (86 aa).

The segment at 1 to 21 (MDPVDPNIEPWNHPGSQPKTA) is disordered. The interval 1–24 (MDPVDPNIEPWNHPGSQPKTACNR) is interaction with human CREBBP. The segment at 1 to 48 (MDPVDPNIEPWNHPGSQPKTACNRCHCKKCCYHCQVCFITKGLGISYG) is transactivation. Residues Cys22, Cys25, and Cys27 each coordinate Zn(2+). A cysteine-rich region spans residues 22–37 (CNRCHCKKCCYHCQVC). At Lys28 the chain carries N6-acetyllysine; by host PCAF. Zn(2+)-binding residues include Cys30, His33, Cys34, and Cys37. The core stretch occupies residues 38–48 (FITKGLGISYG). A disordered region spans residues 47 to 86 (YGRKKRRQRRRPSQGGQTHQDPIPKQPSSQPRGDPTGPKE). Residues 48-58 (GRKKRRQRRRP) are compositionally biased toward basic residues. Positions 49–57 (RKKRRQRRR) match the Nuclear localization signal, RNA-binding (TAR), and protein transduction motif. Residues 49-86 (RKKRRQRRRPSQGGQTHQDPIPKQPSSQPRGDPTGPKE) are interaction with the host capping enzyme RNGTT. An N6-acetyllysine; by host EP300 and GCN5L2 mark is found at Lys50 and Lys51. Residues Arg52 and Arg53 each carry the asymmetric dimethylarginine; by host PRMT6 modification. Residues 60 to 77 (QGGQTHQDPIPKQPSSQP) show a composition bias toward polar residues. A Glycyl lysine isopeptide (Lys-Gly) (interchain with G-Cter in ubiquitin) cross-link involves residue Lys71. Positions 78–80 (RGD) match the Cell attachment site motif.

It belongs to the lentiviruses Tat family. As to quaternary structure, interacts with host CCNT1. Associates with the P-TEFb complex composed at least of Tat, P-TEFb (CDK9 and CCNT1), TAR RNA, RNA Pol II. Recruits the HATs CREBBP, TAF1/TFIID, EP300, PCAF and GCN5L2. Interacts with host KAT5/Tip60; this interaction targets the latter to degradation. Interacts with the host deacetylase SIRT1. Interacts with host capping enzyme RNGTT; this interaction stimulates RNGTT. Binds to host KDR, and to the host integrins ITGAV/ITGB3 and ITGA5/ITGB1. Interacts with host KPNB1/importin beta-1 without previous binding to KPNA1/importin alpha-1. Interacts with EIF2AK2. Interacts with host nucleosome assembly protein NAP1L1; this interaction may be required for the transport of Tat within the nucleus, since the two proteins interact at the nuclear rim. Interacts with host C1QBP/SF2P32; this interaction involves lysine-acetylated Tat. Interacts with the host chemokine receptors CCR2, CCR3 and CXCR4. Interacts with host DPP4/CD26; this interaction may trigger an anti-proliferative effect. Interacts with host LDLR. Interacts with the host extracellular matrix metalloproteinase MMP1. Interacts with host PRMT6; this interaction mediates Tat's methylation. Interacts with, and is ubiquitinated by MDM2/Hdm2. Interacts with host PSMC3 and HTATIP2. Interacts with STAB1; this interaction may overcome SATB1-mediated repression of IL2 and IL2RA (interleukin) in T cells by binding to the same domain than HDAC1. Interacts (when acetylated) with human CDK13, thereby increasing HIV-1 mRNA splicing and promoting the production of the doubly spliced HIV-1 protein Nef. Interacts with host TBP; this interaction modulates the activity of transcriptional pre-initiation complex. Interacts with host RELA. Interacts with host PLSCR1; this interaction negatively regulates Tat transactivation activity by altering its subcellular distribution. Asymmetrical arginine methylation by host PRMT6 seems to diminish the transactivation capacity of Tat and affects the interaction with host CCNT1. Post-translationally, acetylation by EP300, CREBBP, GCN5L2/GCN5 and PCAF regulates the transactivation activity of Tat. EP300-mediated acetylation of Lys-50 promotes dissociation of Tat from the TAR RNA through the competitive binding to PCAF's bromodomain. In addition, the non-acetylated Tat's N-terminus can also interact with PCAF. PCAF-mediated acetylation of Lys-28 enhances Tat's binding to CCNT1. Lys-50 is deacetylated by SIRT1. In terms of processing, polyubiquitination by host MDM2 does not target Tat to degradation, but activates its transactivation function and fosters interaction with CCNT1 and TAR RNA. Phosphorylated by EIF2AK2 on serine and threonine residues adjacent to the basic region important for TAR RNA binding and function. Phosphorylation of Tat by EIF2AK2 is dependent on the prior activation of EIF2AK2 by dsRNA.

Its subcellular location is the host nucleus. It localises to the host nucleolus. It is found in the host cytoplasm. The protein resides in the secreted. Functionally, transcriptional activator that increases RNA Pol II processivity, thereby increasing the level of full-length viral transcripts. Recognizes a hairpin structure at the 5'-LTR of the nascent viral mRNAs referred to as the transactivation responsive RNA element (TAR) and recruits the cyclin T1-CDK9 complex (P-TEFb complex) that will in turn hyperphosphorylate the RNA polymerase II to allow efficient elongation. The CDK9 component of P-TEFb and other Tat-activated kinases hyperphosphorylate the C-terminus of RNA Pol II that becomes stabilized and much more processive. Other factors such as HTATSF1/Tat-SF1, SUPT5H/SPT5, and HTATIP2 are also important for Tat's function. Besides its effect on RNA Pol II processivity, Tat induces chromatin remodeling of proviral genes by recruiting the histone acetyltransferases (HATs) CREBBP, EP300 and PCAF to the chromatin. This also contributes to the increase in proviral transcription rate, especially when the provirus integrates in transcriptionally silent region of the host genome. To ensure maximal activation of the LTR, Tat mediates nuclear translocation of NF-kappa-B by interacting with host RELA. Through its interaction with host TBP, Tat may also modulate transcription initiation. Tat can reactivate a latently infected cell by penetrating in it and transactivating its LTR promoter. In the cytoplasm, Tat is thought to act as a translational activator of HIV-1 mRNAs. Extracellular circulating Tat can be endocytosed by surrounding uninfected cells via the binding to several surface receptors such as CD26, CXCR4, heparan sulfate proteoglycans (HSPG) or LDLR. Neurons are rarely infected, but they internalize Tat via their LDLR. Through its interaction with nuclear HATs, Tat is potentially able to control the acetylation-dependent cellular gene expression. Modulates the expression of many cellular genes involved in cell survival, proliferation or in coding for cytokines or cytokine receptors. Tat plays a role in T-cell and neurons apoptosis. Tat induced neurotoxicity and apoptosis probably contribute to neuroAIDS. Circulating Tat also acts as a chemokine-like and/or growth factor-like molecule that binds to specific receptors on the surface of the cells, affecting many cellular pathways. In the vascular system, Tat binds to ITGAV/ITGB3 and ITGA5/ITGB1 integrins dimers at the surface of endothelial cells and competes with bFGF for heparin-binding sites, leading to an excess of soluble bFGF. In Human immunodeficiency virus type 1 group M subtype D (isolate Z2/CDC-Z34) (HIV-1), this protein is Protein Tat.